We begin with the raw amino-acid sequence, 224 residues long: DNA mismatch repair protein MutH (224 aa).

This sequence belongs to the MutH family.

The protein localises to the cytoplasm. In terms of biological role, sequence-specific endonuclease that cleaves unmethylated GATC sequences. It is involved in DNA mismatch repair. The sequence is that of DNA mismatch repair protein MutH from Histophilus somni (strain 2336) (Haemophilus somnus).